A 291-amino-acid chain; its full sequence is 33 kDa chaperonin (291 aa).

2 disulfides stabilise this stretch: cysteine 237–cysteine 239 and cysteine 270–cysteine 273.

It belongs to the HSP33 family. Post-translationally, under oxidizing conditions two disulfide bonds are formed involving the reactive cysteines. Under reducing conditions zinc is bound to the reactive cysteines and the protein is inactive.

It is found in the cytoplasm. Redox regulated molecular chaperone. Protects both thermally unfolding and oxidatively damaged proteins from irreversible aggregation. Plays an important role in the bacterial defense system toward oxidative stress. In Halalkalibacterium halodurans (strain ATCC BAA-125 / DSM 18197 / FERM 7344 / JCM 9153 / C-125) (Bacillus halodurans), this protein is 33 kDa chaperonin.